The sequence spans 133 residues: MTMTDPVADMLTRLRNANSAYHDTVSMPSSKLKTRVAEILKAEGYIQDWREEEAEVGKKLTIDLKFGPQRERAIAGLRRISKPGLRVYAKSTNLPHVLGGLGIAILSTSSGLLTNQQAAKKAGVGGEVLAYVW.

Belongs to the universal ribosomal protein uS8 family. Part of the 30S ribosomal subunit. Contacts proteins S5 and S12.

One of the primary rRNA binding proteins, it binds directly to 16S rRNA central domain where it helps coordinate assembly of the platform of the 30S subunit. The polypeptide is Small ribosomal subunit protein uS8 (Micrococcus luteus (Micrococcus lysodeikticus)).